Here is a 394-residue protein sequence, read N- to C-terminus: Zinc-regulated GTPase metalloprotein activator 1 (394 aa).

The psi-PxLVp motif motif lies at 16-23 (EDCPELVP). 48-55 (GYLGAGKT) provides a ligand contact to GTP. Residues Cys-106, Cys-108, and Cys-109 each coordinate Zn(2+). A CXCC motif motif is present at residues 106–109 (CLCC). Residues 109–113 (CSVKD) and 202–205 (NKTD) contribute to the GTP site. Residues 272–375 (IVTVTFDVPG…ILQQLFITAV (104 aa)) enclose the CobW C-terminal domain.

It belongs to the SIMIBI class G3E GTPase family. ZNG1 subfamily.

It localises to the nucleus. The catalysed reaction is GTP + H2O = GDP + phosphate + H(+). Zinc chaperone that directly transfers zinc cofactor to target metalloproteins, thereby activating them. Catalyzes zinc insertion into the active site of methionine aminopeptidase METAP1, which function to cleave the initiator methionine from polypeptides during or after protein translation. Mechanistically, the N-terminal psi-PxLVp motif binds to the C6H2-type zinc finger of inactive form of METAP1. After formation of the docked complex, zinc is transferred from the CXCC motif in the GTPase domain of ZNG1 to the zinc binding site in the peptidase domain of METAP1 in a process requiring GTP hydrolysis. GTP/GDP exchange is required for release of active METAP1. The sequence is that of Zinc-regulated GTPase metalloprotein activator 1 (Zng1) from Rattus norvegicus (Rat).